The following is a 348-amino-acid chain: Inositol 2-dehydrogenase/D-chiro-inositol 3-dehydrogenase (348 aa).

The protein belongs to the Gfo/Idh/MocA family. In terms of assembly, homotetramer.

It catalyses the reaction myo-inositol + NAD(+) = scyllo-inosose + NADH + H(+). It carries out the reaction 1D-chiro-inositol + NAD(+) = scyllo-inosine + NADH + H(+). It participates in polyol metabolism; myo-inositol degradation into acetyl-CoA; acetyl-CoA from myo-inositol: step 1/7. In terms of biological role, involved in the oxidation of myo-inositol (MI) and D-chiro-inositol (DCI) to 2-keto-myo-inositol (2KMI or 2-inosose) and 1-keto-D-chiro-inositol (1KDCI), respectively. The protein is Inositol 2-dehydrogenase/D-chiro-inositol 3-dehydrogenase of Halalkalibacterium halodurans (strain ATCC BAA-125 / DSM 18197 / FERM 7344 / JCM 9153 / C-125) (Bacillus halodurans).